Reading from the N-terminus, the 440-residue chain is Ferredoxin--NADP reductase (440 aa).

A CpcD-like domain is found at serine 17–valine 75. Positions lysine 99 to alanine 142 are disordered. Over residues proline 122–lysine 133 the composition is skewed to basic and acidic residues. The 125-residue stretch at asparagine 155–leucine 279 folds into the FAD-binding FR-type domain. FAD-binding positions include arginine 214–serine 217, cysteine 235–arginine 237, tyrosine 241, valine 253–serine 255, and threonine 294. Residues serine 217 and arginine 237 each coordinate NADP(+). Residues threonine 294, valine 330–proline 331, serine 360–arginine 361, arginine 370–glutamine 374, glycine 399–leucine 400, and glutamate 438 each bind NADP(+).

This sequence belongs to the ferredoxin--NADP reductase type 1 family. The cofactor is FAD.

It is found in the cellular thylakoid membrane. The catalysed reaction is 2 reduced [2Fe-2S]-[ferredoxin] + NADP(+) + H(+) = 2 oxidized [2Fe-2S]-[ferredoxin] + NADPH. The protein is Ferredoxin--NADP reductase (petH) of Nostoc sp. (strain ATCC 29151 / PCC 7119) (Anabaena sp.).